Here is a 597-residue protein sequence, read N- to C-terminus: Arginine--tRNA ligase (597 aa).

Residues 125-135 (PNTNKPLHLGH) carry the 'HIGH' region motif.

Belongs to the class-I aminoacyl-tRNA synthetase family. In terms of assembly, monomer.

It localises to the cytoplasm. It catalyses the reaction tRNA(Arg) + L-arginine + ATP = L-arginyl-tRNA(Arg) + AMP + diphosphate. The chain is Arginine--tRNA ligase from Porphyromonas gingivalis (strain ATCC 33277 / DSM 20709 / CIP 103683 / JCM 12257 / NCTC 11834 / 2561).